Consider the following 212-residue polypeptide: MFNRVFTRSFASSLRAAASKAAAPPPVRLFGVEGTYATALYQAAAKNSSIDAAFQSLQKVESTVKKNPKLGHLLLNPALSLKDRNSVIDAIVETHKNLDGYVVNLLKVLSENNRLGCFEKIASDFGVLNDAHNGLLKGTVTSAEPLDPKSFKRIEKALSASKLVGQGKSLKLENVVKPEIKGGLIVELGDKTVDLSISTKIQKLNKVLEDSI.

The N-terminal 17 residues, 1–17 (MFNRVFTRSFASSLRAA), are a transit peptide targeting the mitochondrion.

This sequence belongs to the ATPase delta chain family. In terms of assembly, F-type ATPases have 2 components, CF(1) - the catalytic core - and CF(0) - the membrane proton channel. CF(1) has five subunits: alpha(3), beta(3), gamma(1), delta(1), epsilon(1). CF(0) has three main subunits: a, b and c.

The protein localises to the mitochondrion. It localises to the mitochondrion inner membrane. In terms of biological role, mitochondrial membrane ATP synthase (F(1)F(0) ATP synthase or Complex V) produces ATP from ADP in the presence of a proton gradient across the membrane which is generated by electron transport complexes of the respiratory chain. F-type ATPases consist of two structural domains, F(1) - containing the extramembraneous catalytic core and F(0) - containing the membrane proton channel, linked together by a central stalk and a peripheral stalk. During catalysis, ATP synthesis in the catalytic domain of F(1) is coupled via a rotary mechanism of the central stalk subunits to proton translocation. Part of the complex F(0) domain and the peripheric stalk, which acts as a stator to hold the catalytic alpha(3)beta(3) subcomplex and subunit a/ATP6 static relative to the rotary elements. This chain is ATP synthase subunit 5, mitochondrial (ATP5), found in Saccharomyces cerevisiae (strain ATCC 204508 / S288c) (Baker's yeast).